The chain runs to 296 residues: Complex I intermediate-associated protein 30, mitochondrial (296 aa).

A mitochondrion-targeting transit peptide spans 1–29; sequence MNSLLRQGLRLGCCLPAVQQQIHTTAVHR.

It belongs to the CIA30 family. Associates with mitochondrial complex I assembly intermediates during its biogenesis.

Its subcellular location is the mitochondrion. Its function is as follows. Chaperone protein involved in the assembly of the mitochondrial NADH:ubiquinone oxidoreductase complex (complex I). This chain is Complex I intermediate-associated protein 30, mitochondrial, found in Drosophila melanogaster (Fruit fly).